The sequence spans 887 residues: Chaperone protein ClpB 2 (887 aa).

The Clp R domain occupies 6–147 (PTKFTDKAWE…AATVKAIRGA (142 aa)). Repeat regions lie at residues 9-73 (FTDK…ARQQ) and 84-147 (CGRS…IRGA). Residues 160–342 (AALEKYGRDL…RRFQQVYIGQ (183 aa)) are NBD1. 207 to 214 (GEPGVGKT) lines the ATP pocket. Positions 343 to 559 (PSVEDTISIL…IAEIVAKWTG (217 aa)) are linker. Positions 393-535 (IDLVDEAAAK…TEAQLLELQA (143 aa)) form a coiled coil. Residues 569–780 (ERQKLLQLEQ…RIDDVILFHG (212 aa)) are NBD2. 619–626 (GPTGVGKT) is a binding site for ATP. The segment at 781–887 (LGRTELAQIA…TGDRDTVSAS (107 aa)) is C-terminal.

The protein belongs to the ClpA/ClpB family. As to quaternary structure, homohexamer. The oligomerization is ATP-dependent.

It is found in the cytoplasm. Its function is as follows. Part of a stress-induced multi-chaperone system, it is involved in the recovery of the cell from heat-induced damage, in cooperation with DnaK, DnaJ and GrpE. Acts before DnaK, in the processing of protein aggregates. Protein binding stimulates the ATPase activity; ATP hydrolysis unfolds the denatured protein aggregates, which probably helps expose new hydrophobic binding sites on the surface of ClpB-bound aggregates, contributing to the solubilization and refolding of denatured protein aggregates by DnaK. The protein is Chaperone protein ClpB 2 (clpB2) of Thermosynechococcus vestitus (strain NIES-2133 / IAM M-273 / BP-1).